Consider the following 151-residue polypeptide: UPF0178 protein PFLU_5917 (151 aa).

Belongs to the UPF0178 family.

This is UPF0178 protein PFLU_5917 from Pseudomonas fluorescens (strain SBW25).